A 240-amino-acid polypeptide reads, in one-letter code: Probable peptide export permease protein YydJ (240 aa).

6 helical membrane passes run 13–33 (VIII…FLLV), 50–70 (SYTV…AFFI), 97–117 (IAVL…IISL), 126–146 (ALLL…IGTI), 153–173 (ILIS…LVAI), and 210–230 (VLFI…VLRF).

The complex is composed of 2 ATP-binding proteins (YydI), two transmembrane proteins (YydJ).

It localises to the cell membrane. Its function is as follows. Suggested to be part of an ABC transporter complex YydIJ involved in export of the modified peptide YydF. The sequence is that of Probable peptide export permease protein YydJ (yydJ) from Bacillus subtilis (strain 168).